Consider the following 181-residue polypeptide: uncharacterized protein (181 aa).

This is an uncharacterized protein from Methanocaldococcus jannaschii (strain ATCC 43067 / DSM 2661 / JAL-1 / JCM 10045 / NBRC 100440) (Methanococcus jannaschii).